Here is a 631-residue protein sequence, read N- to C-terminus: tRNA uridine 5-carboxymethylaminomethyl modification enzyme MnmG (631 aa).

G15–G20 contacts FAD. Positions Y214 to S233 are disordered. G276–F290 serves as a coordination point for NAD(+).

The protein belongs to the MnmG family. In terms of assembly, homodimer. Heterotetramer of two MnmE and two MnmG subunits. FAD is required as a cofactor.

It localises to the cytoplasm. In terms of biological role, NAD-binding protein involved in the addition of a carboxymethylaminomethyl (cmnm) group at the wobble position (U34) of certain tRNAs, forming tRNA-cmnm(5)s(2)U34. In Lactobacillus delbrueckii subsp. bulgaricus (strain ATCC BAA-365 / Lb-18), this protein is tRNA uridine 5-carboxymethylaminomethyl modification enzyme MnmG.